The sequence spans 255 residues: Acetylglutamate kinase (255 aa).

Substrate-binding positions include 40–41 (GG), Arg62, and Asn153.

Belongs to the acetylglutamate kinase family. ArgB subfamily.

It localises to the cytoplasm. It catalyses the reaction N-acetyl-L-glutamate + ATP = N-acetyl-L-glutamyl 5-phosphate + ADP. The protein operates within amino-acid biosynthesis; L-arginine biosynthesis; N(2)-acetyl-L-ornithine from L-glutamate: step 2/4. Its function is as follows. Catalyzes the ATP-dependent phosphorylation of N-acetyl-L-glutamate. This Bacillus cereus (strain ATCC 14579 / DSM 31 / CCUG 7414 / JCM 2152 / NBRC 15305 / NCIMB 9373 / NCTC 2599 / NRRL B-3711) protein is Acetylglutamate kinase.